We begin with the raw amino-acid sequence, 202 residues long: Peroxynitrite isomerase (202 aa).

Residues 21 to 27 (GEWEGRG) carry the GXWXGXG motif. Position 193 (H193) interacts with heme b.

Belongs to the nitrobindin family. As to quaternary structure, homodimer. Heme b is required as a cofactor.

It catalyses the reaction peroxynitrite = nitrate. It participates in nitrogen metabolism. Functionally, heme-binding protein able to scavenge peroxynitrite and to protect free L-tyrosine against peroxynitrite-mediated nitration, by acting as a peroxynitrite isomerase that converts peroxynitrite to nitrate. Therefore, this protein likely plays a role in peroxynitrite sensing and in the detoxification of reactive nitrogen and oxygen species (RNS and ROS, respectively). Is able to bind nitric oxide (NO) in vitro, but may act as a sensor of peroxynitrite levels in vivo. This is Peroxynitrite isomerase from Pseudarthrobacter chlorophenolicus (strain ATCC 700700 / DSM 12829 / CIP 107037 / JCM 12360 / KCTC 9906 / NCIMB 13794 / A6) (Arthrobacter chlorophenolicus).